Reading from the N-terminus, the 450-residue chain is Phosphoglucosamine mutase (450 aa).

The Phosphoserine intermediate role is filled by Ser101. Mg(2+) is bound by residues Ser101, Asp241, Asp243, and Asp245. A Phosphoserine modification is found at Ser101.

Belongs to the phosphohexose mutase family. It depends on Mg(2+) as a cofactor. Post-translationally, activated by phosphorylation.

The catalysed reaction is alpha-D-glucosamine 1-phosphate = D-glucosamine 6-phosphate. In terms of biological role, catalyzes the conversion of glucosamine-6-phosphate to glucosamine-1-phosphate. The sequence is that of Phosphoglucosamine mutase from Lysinibacillus sphaericus (strain C3-41).